A 191-amino-acid polypeptide reads, in one-letter code: MLAIGITGSYASGKTFILDYLAEKGYKTFCADRCIKELYQDLKIQTGILKLLPELETFNIGKISNLIYNNDLAREKLQNFIYPLLIEKLIQFKQENVNSKFGFAEIPLLYEAKFDKYFDFVVTVHCSEEIRMQRATTRSSFDVEIYNKIKEIQLSQESKIAKADFAINSGVDMLDLEKQINNLIANLECRV.

The DPCK domain maps to 3–191 (AIGITGSYAS…NLIANLECRV (189 aa)). Position 11 to 16 (11 to 16 (ASGKTF)) interacts with ATP.

It belongs to the CoaE family.

The protein resides in the cytoplasm. It catalyses the reaction 3'-dephospho-CoA + ATP = ADP + CoA + H(+). The protein operates within cofactor biosynthesis; coenzyme A biosynthesis; CoA from (R)-pantothenate: step 5/5. Functionally, catalyzes the phosphorylation of the 3'-hydroxyl group of dephosphocoenzyme A to form coenzyme A. The sequence is that of Dephospho-CoA kinase from Rickettsia bellii (strain RML369-C).